A 533-amino-acid chain; its full sequence is Flavin-containing monooxygenase 5 (533 aa).

The residue at position 5 (Arg-5) is a Dimethylated arginine. FAD contacts are provided by residues 10–14 (GGGVS), Glu-33, and 41–42 (LW). Ser-54 carries the phosphoserine modification. Tyr-56 is modified (phosphotyrosine). Ser-58 is subject to Phosphoserine. Residue 62-63 (NT) participates in FAD binding. 196 to 199 (SGGD) serves as a coordination point for NADP(+). Phosphoserine is present on Ser-280. Thr-284 carries the post-translational modification Phosphothreonine. A Phosphoserine modification is found at Ser-401. A helical transmembrane segment spans residues 513-533 (TMTIGKFMLALAFFAIIIAYF).

This sequence belongs to the FMO family. The cofactor is FAD. In terms of tissue distribution, expressed in fetal and adult liver.

The protein localises to the microsome membrane. Its subcellular location is the endoplasmic reticulum membrane. It catalyses the reaction N,N-dimethylaniline + NADPH + O2 + H(+) = N,N-dimethylaniline N-oxide + NADP(+) + H2O. The enzyme catalyses NADPH + O2 + H(+) = H2O2 + NADP(+). The catalysed reaction is heptan-2-one + NADPH + O2 + H(+) = pentyl acetate + NADP(+) + H2O. It carries out the reaction octan-3-one + NADPH + O2 + H(+) = pentyl propanoate + NADP(+) + H2O. It catalyses the reaction octan-3-one + NADPH + O2 + H(+) = ethyl hexanoate + NADP(+) + H2O. The enzyme catalyses hexan-3-one + NADPH + O2 + H(+) = ethyl butanoate + NADP(+) + H2O. The catalysed reaction is hexan-3-one + NADPH + O2 + H(+) = propyl propanoate + NADP(+) + H2O. It carries out the reaction heptan-4-one + NADPH + O2 + H(+) = propyl butanoate + NADP(+) + H2O. It catalyses the reaction (2E)-geranial + NADPH + O2 + H(+) = (1E)-2,6-dimethylhepta-1,5-dien-1-yl formate + NADP(+) + H2O. The enzyme catalyses sulcatone + NADPH + O2 + H(+) = 4-methylpent-3-en-1-yl acetate + NADP(+) + H2O. In terms of biological role, acts as a Baeyer-Villiger monooxygenase on a broad range of substrates. Catalyzes the insertion of an oxygen atom into a carbon-carbon bond adjacent to a carbonyl, which converts ketones to esters. Active on diverse carbonyl compounds, whereas soft nucleophiles are mostly non- or poorly reactive. In contrast with other forms of FMO it is non- or poorly active on 'classical' substrates such as drugs, pesticides, and dietary components containing soft nucleophilic heteroatoms. Able to oxidize drug molecules bearing a carbonyl group on an aliphatic chain, such as nabumetone and pentoxifylline. Also, in the absence of substrates, shows slow but yet significant NADPH oxidase activity. Acts as a positive modulator of cholesterol biosynthesis as well as glucose homeostasis, promoting metabolic aging via pleiotropic effects. In Homo sapiens (Human), this protein is Flavin-containing monooxygenase 5.